We begin with the raw amino-acid sequence, 262 residues long: Small ribosomal subunit protein eS1 (262 aa).

The span at 1 to 18 (MAVGKNKRISKGKKGSKK) shows a compositional bias: basic residues. Residues 1–20 (MAVGKNKRISKGKKGSKKKT) are disordered.

It belongs to the eukaryotic ribosomal protein eS1 family. In terms of assembly, component of the small ribosomal subunit. Mature ribosomes consist of a small (40S) and a large (60S) subunit. The 40S subunit contains about 33 different proteins and 1 molecule of RNA (18S). The 60S subunit contains about 49 different proteins and 3 molecules of RNA (25S, 5.8S and 5S).

It localises to the cytoplasm. This is Small ribosomal subunit protein eS1 from Oryza sativa subsp. japonica (Rice).